Consider the following 238-residue polypeptide: 1-(5-phosphoribosyl)-5-[(5-phosphoribosylamino)methylideneamino] imidazole-4-carboxamide isomerase (238 aa).

D8 serves as the catalytic Proton acceptor. The active-site Proton donor is D130.

The protein belongs to the HisA/HisF family.

Its subcellular location is the cytoplasm. It catalyses the reaction 1-(5-phospho-beta-D-ribosyl)-5-[(5-phospho-beta-D-ribosylamino)methylideneamino]imidazole-4-carboxamide = 5-[(5-phospho-1-deoxy-D-ribulos-1-ylimino)methylamino]-1-(5-phospho-beta-D-ribosyl)imidazole-4-carboxamide. It functions in the pathway amino-acid biosynthesis; L-histidine biosynthesis; L-histidine from 5-phospho-alpha-D-ribose 1-diphosphate: step 4/9. The sequence is that of 1-(5-phosphoribosyl)-5-[(5-phosphoribosylamino)methylideneamino] imidazole-4-carboxamide isomerase from Methanococcus vannielii (strain ATCC 35089 / DSM 1224 / JCM 13029 / OCM 148 / SB).